A 177-amino-acid chain; its full sequence is Putative fimbrin-like protein FimI (177 aa).

Residues 1 to 19 form the signal peptide; that stretch reads MIRKGAALVGLVLMSPVIA. A disulfide bridge connects residues Cys40 and Cys81.

Belongs to the fimbrial protein family.

It localises to the fimbrium. The polypeptide is Putative fimbrin-like protein FimI (fimI) (Salmonella typhi).